Here is a 225-residue protein sequence, read N- to C-terminus: PKHD-type hydroxylase YbiX (225 aa).

The 100-residue stretch at 78–177 folds into the Fe2OG dioxygenase domain; it reads TLSTPLFNRY…RVASFMWIQS (100 aa). The Fe cation site is built by histidine 96, aspartate 98, and histidine 158. Arginine 168 is a binding site for 2-oxoglutarate.

Requires Fe(2+) as cofactor. L-ascorbate is required as a cofactor.

This Escherichia coli O6:H1 (strain CFT073 / ATCC 700928 / UPEC) protein is PKHD-type hydroxylase YbiX.